The following is a 287-amino-acid chain: Bifunctional protein FolD (287 aa).

NADP(+) is bound by residues 160–162, Ser189, and Ile230; that span reads GRS.

The protein belongs to the tetrahydrofolate dehydrogenase/cyclohydrolase family. As to quaternary structure, homodimer.

It catalyses the reaction (6R)-5,10-methylene-5,6,7,8-tetrahydrofolate + NADP(+) = (6R)-5,10-methenyltetrahydrofolate + NADPH. It carries out the reaction (6R)-5,10-methenyltetrahydrofolate + H2O = (6R)-10-formyltetrahydrofolate + H(+). It participates in one-carbon metabolism; tetrahydrofolate interconversion. Functionally, catalyzes the oxidation of 5,10-methylenetetrahydrofolate to 5,10-methenyltetrahydrofolate and then the hydrolysis of 5,10-methenyltetrahydrofolate to 10-formyltetrahydrofolate. This Chlamydia felis (strain Fe/C-56) (Chlamydophila felis) protein is Bifunctional protein FolD.